The following is a 439-amino-acid chain: Serine hydroxymethyltransferase (439 aa).

Residues 1-20 (MNAPHRDETTASHRDDGFFT) form a disordered region. (6S)-5,6,7,8-tetrahydrofolate is bound by residues Leu136 and 140–142 (GHL). Lys245 is subject to N6-(pyridoxal phosphate)lysine.

This sequence belongs to the SHMT family. In terms of assembly, homodimer. Pyridoxal 5'-phosphate serves as cofactor.

The protein localises to the cytoplasm. It catalyses the reaction (6R)-5,10-methylene-5,6,7,8-tetrahydrofolate + glycine + H2O = (6S)-5,6,7,8-tetrahydrofolate + L-serine. Its pathway is one-carbon metabolism; tetrahydrofolate interconversion. It participates in amino-acid biosynthesis; glycine biosynthesis; glycine from L-serine: step 1/1. Catalyzes the reversible interconversion of serine and glycine with tetrahydrofolate (THF) serving as the one-carbon carrier. This reaction serves as the major source of one-carbon groups required for the biosynthesis of purines, thymidylate, methionine, and other important biomolecules. Also exhibits THF-independent aldolase activity toward beta-hydroxyamino acids, producing glycine and aldehydes, via a retro-aldol mechanism. The polypeptide is Serine hydroxymethyltransferase (Jannaschia sp. (strain CCS1)).